The chain runs to 349 residues: Biotin synthase (349 aa).

Residues 70–295 form the Radical SAM core domain; that stretch reads PEVEVEGIIS…RTMLRFAGGR (226 aa). [4Fe-4S] cluster-binding residues include Cys85, Cys89, and Cys92. The [2Fe-2S] cluster site is built by Cys128, Cys161, Cys220, and Arg290.

Belongs to the radical SAM superfamily. Biotin synthase family. As to quaternary structure, homodimer. [4Fe-4S] cluster is required as a cofactor. The cofactor is [2Fe-2S] cluster.

The catalysed reaction is (4R,5S)-dethiobiotin + (sulfur carrier)-SH + 2 reduced [2Fe-2S]-[ferredoxin] + 2 S-adenosyl-L-methionine = (sulfur carrier)-H + biotin + 2 5'-deoxyadenosine + 2 L-methionine + 2 oxidized [2Fe-2S]-[ferredoxin]. The protein operates within cofactor biosynthesis; biotin biosynthesis; biotin from 7,8-diaminononanoate: step 2/2. Its function is as follows. Catalyzes the conversion of dethiobiotin (DTB) to biotin by the insertion of a sulfur atom into dethiobiotin via a radical-based mechanism. The protein is Biotin synthase of Mycobacterium bovis (strain ATCC BAA-935 / AF2122/97).